The primary structure comprises 247 residues: 3-deoxy-manno-octulosonate cytidylyltransferase (247 aa).

Belongs to the KdsB family.

The protein localises to the cytoplasm. It carries out the reaction 3-deoxy-alpha-D-manno-oct-2-ulosonate + CTP = CMP-3-deoxy-beta-D-manno-octulosonate + diphosphate. Its pathway is nucleotide-sugar biosynthesis; CMP-3-deoxy-D-manno-octulosonate biosynthesis; CMP-3-deoxy-D-manno-octulosonate from 3-deoxy-D-manno-octulosonate and CTP: step 1/1. The protein operates within bacterial outer membrane biogenesis; lipopolysaccharide biosynthesis. Its function is as follows. Activates KDO (a required 8-carbon sugar) for incorporation into bacterial lipopolysaccharide in Gram-negative bacteria. This is 3-deoxy-manno-octulosonate cytidylyltransferase from Afipia carboxidovorans (strain ATCC 49405 / DSM 1227 / KCTC 32145 / OM5) (Oligotropha carboxidovorans).